Consider the following 196-residue polypeptide: Autophagy-related protein 31 (196 aa).

The segment at 20–45 is disordered; it reads IKNNKGPSNDDQPAYNNESKSTDGSD. Residues 22–43 are compositionally biased toward polar residues; sequence NNKGPSNDDQPAYNNESKSTDG. Phosphoserine occurs at positions 38 and 40. At threonine 41 the chain carries Phosphothreonine. Phosphoserine is present on residues serine 44 and serine 116. Over residues 120-129 the composition is skewed to polar residues; sequence EENQMRTLSS. The segment at 120 to 145 is disordered; that stretch reads EENQMRTLSSHGDDKSNDEEEELSVD. Phosphoserine occurs at positions 135, 143, 146, 153, 174, and 195. The segment covering 135–144 has biased composition (acidic residues); sequence SNDEEEELSV.

As to quaternary structure, forms a stable complex with ATG17 and ATG29. Interacts directly with ATG29. The ATG17-ATG29-ATG31 complex interacts with the ATG1-ATG13 complex. Note=The interaction with the ATG1-ATG13 complex is induced by starvation. In terms of processing, highly phosphorylated. Ser-174 is phosphorylated constitutively. Phosphorylation at Ser-174 is required for autophagy induced by various autophagy stimuli such as nitrogen starvation and rapamycin treatment.

Its subcellular location is the cytoplasm. The protein localises to the cytoskeleton. It localises to the preautophagosomal structure. Its function is as follows. Plays a role in starvation-induced autophagy. Involved in mitophagy. Functions with ATG17 and ATG29 at the preautophagosomal structure (PAS) in order to form normal autophagosomes under starvation conditions. May be involved in microtubule function, such as chromosome segregation and karyogamy. This chain is Autophagy-related protein 31 (ATG31), found in Saccharomyces cerevisiae (strain ATCC 204508 / S288c) (Baker's yeast).